We begin with the raw amino-acid sequence, 479 residues long: UDP-N-acetylmuramoylalanine--D-glutamate ligase (479 aa).

Position 110 to 116 (110 to 116 (GTNGKTS)) interacts with ATP.

This sequence belongs to the MurCDEF family.

Its subcellular location is the cytoplasm. The enzyme catalyses UDP-N-acetyl-alpha-D-muramoyl-L-alanine + D-glutamate + ATP = UDP-N-acetyl-alpha-D-muramoyl-L-alanyl-D-glutamate + ADP + phosphate + H(+). Its pathway is cell wall biogenesis; peptidoglycan biosynthesis. Cell wall formation. Catalyzes the addition of glutamate to the nucleotide precursor UDP-N-acetylmuramoyl-L-alanine (UMA). This is UDP-N-acetylmuramoylalanine--D-glutamate ligase from Bifidobacterium adolescentis (strain ATCC 15703 / DSM 20083 / NCTC 11814 / E194a).